The sequence spans 94 residues: Pyrimidine/purine nucleoside phosphorylase (94 aa).

Belongs to the nucleoside phosphorylase PpnP family.

The enzyme catalyses a purine D-ribonucleoside + phosphate = a purine nucleobase + alpha-D-ribose 1-phosphate. The catalysed reaction is adenosine + phosphate = alpha-D-ribose 1-phosphate + adenine. It catalyses the reaction cytidine + phosphate = cytosine + alpha-D-ribose 1-phosphate. It carries out the reaction guanosine + phosphate = alpha-D-ribose 1-phosphate + guanine. The enzyme catalyses inosine + phosphate = alpha-D-ribose 1-phosphate + hypoxanthine. The catalysed reaction is thymidine + phosphate = 2-deoxy-alpha-D-ribose 1-phosphate + thymine. It catalyses the reaction uridine + phosphate = alpha-D-ribose 1-phosphate + uracil. It carries out the reaction xanthosine + phosphate = alpha-D-ribose 1-phosphate + xanthine. Functionally, catalyzes the phosphorolysis of diverse nucleosides, yielding D-ribose 1-phosphate and the respective free bases. Can use uridine, adenosine, guanosine, cytidine, thymidine, inosine and xanthosine as substrates. Also catalyzes the reverse reactions. The chain is Pyrimidine/purine nucleoside phosphorylase from Klebsiella pneumoniae (strain 342).